A 1052-amino-acid chain; its full sequence is Kinesin-like protein KIF11 (1052 aa).

Positions 17–358 (NIQVVVRCRP…LEYAHRAKNI (342 aa)) constitute a Kinesin motor domain. 104–111 (GQTGTGKT) is a binding site for ATP. K145 is subject to N6-acetyllysine. Residues 364–478 (VNQKLTKKAL…ETKLQLVKEE (115 aa)) are a coiled coil. T457 carries the post-translational modification Phosphothreonine. Residue K476 forms a Glycyl lysine isopeptide (Lys-Gly) (interchain with G-Cter in SUMO2) linkage. T925 carries the phosphothreonine modification. 2 disordered regions span residues 950–1026 (LQKK…LNPV) and 1033–1052 (EASDLSISKSRLPLHTSINL). A coiled-coil region spans residues 963–988 (EASKETSQDMDEEREALEQCTEELVS). A compositionally biased stretch (basic and acidic residues) spans 1016 to 1026 (KDKENRGLNPV).

The protein belongs to the TRAFAC class myosin-kinesin ATPase superfamily. Kinesin family. BimC subfamily. Interacts with the thyroid hormone receptor in the presence of thyroid hormone. Component of a large chromatin remodeling complex, at least composed of MYSM1, PCAF, RBM10 and KIF11/TRIP5. Interacts with RARRES1 and AGBL2. In terms of processing, phosphorylated exclusively on serine during S phase, but on both serine and Thr-925 during mitosis, so controlling the association of KIF11 with the spindle apparatus (probably during early prophase).

It is found in the cytoplasm. It localises to the cytoskeleton. The protein localises to the spindle pole. In terms of biological role, motor protein required for establishing a bipolar spindle during mitosis. Required in non-mitotic cells for transport of secretory proteins from the Golgi complex to the cell surface. This is Kinesin-like protein KIF11 (Kif11) from Mus musculus (Mouse).